The following is a 544-amino-acid chain: MSAKDVKFGDSARSKMIAGVNVLADAVKVTLGPKGRNVVIDRSFGAPHITKDGVTVAKEISLKDKFENMGAQLVREVSSKTNDIAGDGTTTATVLAQAILNEGIKSVTAGMNPMDLKRGIDIAVKTVVENIRSIAKPADDFKAIEQVGSISANSDTTVGKLIAQAMEKVGKEGVITVEEGSGFEDALDVVEGMQFDRGYISPYFANKQDTLTAELENPFILLVDKKISNIRELISVLEAVAKTGKPLLIIAEDVEGEALATLVVNNMRGIIKVCAVKAPGFGDRRKAMLQDIAILTGATVISEEVGMSLEQATLQDLGTAHKITVSKENTVIVDGAGDAAAIAERVQQIRAQIEESTSEYDREKLQERVAKLAGGVAVIKIGAATEVEMKEKKDRVDDALHATRAAVEEGVVAGGGVALVRAVNALEGLKGANEDQTAGINILRRAIEAPLRQIVANAGDEPSVVINAVKNGEGNFGYNAATGEYGDMLEMGILDPAKVTRSALEHAASVAGLMLTTECMITDIPEDKPAAPDMGGMGGMGGMM.

Residues 30–33, K51, 87–91, G415, 479–481, and D495 contribute to the ATP site; these read TLGP, DGTTT, and NAA.

It belongs to the chaperonin (HSP60) family. Forms a cylinder of 14 subunits composed of two heptameric rings stacked back-to-back. Interacts with the co-chaperonin GroES.

The protein localises to the cytoplasm. The catalysed reaction is ATP + H2O + a folded polypeptide = ADP + phosphate + an unfolded polypeptide.. Together with its co-chaperonin GroES, plays an essential role in assisting protein folding. The GroEL-GroES system forms a nano-cage that allows encapsulation of the non-native substrate proteins and provides a physical environment optimized to promote and accelerate protein folding. This chain is Chaperonin GroEL, found in Acinetobacter baumannii (strain AB307-0294).